The following is a 202-amino-acid chain: Small ribosomal subunit protein bS20c (202 aa).

The transit peptide at 1–79 (MATIVQCLSS…KPMRQLIVCE (79 aa)) directs the protein to the chloroplast. The interval 89 to 110 (SAAKRARQAEKRRVYNKSKKSE) is disordered.

This sequence belongs to the bacterial ribosomal protein bS20 family. In terms of assembly, part of the 30S ribosomal subunit.

The protein resides in the plastid. It localises to the chloroplast. Binds directly to 16S ribosomal RNA. This is Small ribosomal subunit protein bS20c (RPS20) from Arabidopsis thaliana (Mouse-ear cress).